The chain runs to 1250 residues: Phospholipid-transporting ATPase IC (1250 aa).

Composition is skewed to acidic residues over residues Met-1–Ser-13 and Ser-24–Pro-40. The segment at Met-1–Ser-52 is disordered. Over Met-1–Gln-133 the chain is Cytoplasmic. A helical transmembrane segment spans residues Ile-134–Ala-154. Topologically, residues Ile-155–Met-338 are exoplasmic loop. Residues Val-339 to Phe-359 traverse the membrane as a helical segment. Residues Trp-360–Gly-385 are Cytoplasmic-facing. Residues Phe-386–Val-406 traverse the membrane as a helical segment. Residues Ser-407–Asn-956 lie on the Exoplasmic loop side of the membrane. The active-site 4-aspartylphosphate intermediate is the Asp-454. Asp-454, Lys-455, Thr-456, Glu-553, Phe-594, Lys-617, Arg-650, Thr-730, Gly-731, Asp-732, Arg-865, and Lys-871 together coordinate ATP. Position 454 (Asp-454) interacts with Mg(2+). Thr-456 serves as a coordination point for Mg(2+). A Mg(2+)-binding site is contributed by Asp-891. The ATP site is built by Asn-894 and Asp-895. Asp-895 contacts Mg(2+). The chain crosses the membrane as a helical span at residues Phe-957–Val-977. Residues Tyr-978–Asp-980 are Cytoplasmic-facing. A helical membrane pass occupies residues Trp-981–Leu-1001. At Asp-1002–Ser-1034 the chain is on the exoplasmic loop side. Residues Leu-1035–Leu-1055 traverse the membrane as a helical segment. Residues Thr-1056–Ser-1069 are Cytoplasmic-facing. The helical transmembrane segment at Phe-1070–Thr-1090 threads the bilayer. At Ser-1091–Tyr-1092 the chain is on the exoplasmic loop side. Residues Trp-1093–Phe-1113 traverse the membrane as a helical segment. Residues Asp-1114–Ser-1117 lie on the Cytoplasmic side of the membrane. A helical transmembrane segment spans residues Ala-1118 to Leu-1138. The Exoplasmic loop portion of the chain corresponds to Arg-1139–Gln-1140. A helical transmembrane segment spans residues Pro-1141 to Leu-1161. At Arg-1162 to Thr-1250 the chain is on the cytoplasmic side.

Belongs to the cation transport ATPase (P-type) (TC 3.A.3) family. Type IV subfamily. As to quaternary structure, component of a P4-ATPase flippase complex which consists of a catalytic alpha subunit and an accessory beta subunit. The flippase ATP8B1:TMEM30A complex can form an intermediate phosphoenzyme in vitro. Also interacts with beta subunit TMEM30B. It depends on Mg(2+) as a cofactor.

It localises to the cell membrane. The protein resides in the apical cell membrane. The protein localises to the cell projection. Its subcellular location is the stereocilium. It is found in the endoplasmic reticulum. It localises to the golgi apparatus. The enzyme catalyses ATP + H2O + phospholipidSide 1 = ADP + phosphate + phospholipidSide 2.. It carries out the reaction a 1,2-diacyl-sn-glycero-3-phospho-L-serine(out) + ATP + H2O = a 1,2-diacyl-sn-glycero-3-phospho-L-serine(in) + ADP + phosphate + H(+). In terms of biological role, catalytic component of a P4-ATPase flippase complex which catalyzes the hydrolysis of ATP coupled to the transport of aminophospholipids from the outer to the inner leaflet of various membranes and ensures the maintenance of asymmetric distribution of phospholipids. Phospholipid translocation also seems to be implicated in vesicle formation and in uptake of lipid signaling molecules. May also participate in the establishment of the canalicular membrane integrity by ensuring asymmetric distribution of phospholipids in the canicular membrane. The sequence is that of Phospholipid-transporting ATPase IC (atp8b1) from Xenopus tropicalis (Western clawed frog).